Here is a 322-residue protein sequence, read N- to C-terminus: Large ribosomal subunit protein uL15m (322 aa).

A mitochondrion-targeting transit peptide spans 1–57 (MKAERQTGLRNSFTTVIGRKLINTFVPSMMLTSVAGNDIFFRGLFKSPVLAFQSYRY). Positions 69 to 99 (GSTKSFKRLGRGPSSGLGKTSGRGQKGQKAR) are disordered. Gly residues predominate over residues 81 to 93 (PSSGLGKTSGRGQ).

Belongs to the universal ribosomal protein uL15 family. Component of the mitochondrial large ribosomal subunit (mt-LSU). Mature yeast 74S mitochondrial ribosomes consist of a small (37S) and a large (54S) subunit. The 37S small subunit contains a 15S ribosomal RNA (15S mt-rRNA) and 34 different proteins. The 54S large subunit contains a 21S rRNA (21S mt-rRNA) and 46 different proteins.

It localises to the mitochondrion. Component of the mitochondrial ribosome (mitoribosome), a dedicated translation machinery responsible for the synthesis of mitochondrial genome-encoded proteins, including at least some of the essential transmembrane subunits of the mitochondrial respiratory chain. The mitoribosomes are attached to the mitochondrial inner membrane and translation products are cotranslationally integrated into the membrane. This is Large ribosomal subunit protein uL15m (MRPL10) from Saccharomyces cerevisiae (strain ATCC 204508 / S288c) (Baker's yeast).